Here is a 405-residue protein sequence, read N- to C-terminus: GTPase Obg (405 aa).

The Obg domain occupies 1–159; the sequence is MKFVDEVSIF…RDLKLELKVL (159 aa). The segment at 127–148 is disordered; sequence NTRFKSSTNRAPRQTTPGKPGE. Positions 129 to 143 are enriched in polar residues; the sequence is RFKSSTNRAPRQTTP. The OBG-type G domain occupies 160 to 333; sequence ADVGLLGLPN…LCQDIMHYLD (174 aa). Residues 166-173, 191-195, 213-216, 283-286, and 314-316 each bind GTP; these read GLPNAGKS, FTTLV, DIPG, NKAD, and SAL. Ser173 and Thr193 together coordinate Mg(2+). Residues 383–398 show a composition bias toward acidic residues; the sequence is ALEDEDDFDDEDDGDG. Residues 383–405 are disordered; that stretch reads ALEDEDDFDDEDDGDGPEIFYVR.

This sequence belongs to the TRAFAC class OBG-HflX-like GTPase superfamily. OBG GTPase family. Monomer. Mg(2+) is required as a cofactor.

It is found in the cytoplasm. Functionally, an essential GTPase which binds GTP, GDP and possibly (p)ppGpp with moderate affinity, with high nucleotide exchange rates and a fairly low GTP hydrolysis rate. Plays a role in control of the cell cycle, stress response, ribosome biogenesis and in those bacteria that undergo differentiation, in morphogenesis control. This is GTPase Obg from Azotobacter vinelandii (strain DJ / ATCC BAA-1303).